Reading from the N-terminus, the 126-residue chain is Fluoride-specific ion channel FluC (126 aa).

The next 4 helical transmembrane spans lie at 9-29, 35-55, 63-83, and 94-114; these read LAVFAGGAIGSVLRELLGFQL, LTATFGINIAACFLLGWLYAI, LLHLGAVGFCGGLSTFSSFVL, and WSIGLTAMTLEIAAGLAAAIL. Positions 73 and 76 each coordinate Na(+).

Belongs to the fluoride channel Fluc/FEX (TC 1.A.43) family.

Its subcellular location is the cell inner membrane. The catalysed reaction is fluoride(in) = fluoride(out). Na(+) is not transported, but it plays an essential structural role and its presence is essential for fluoride channel function. Fluoride-specific ion channel. Important for reducing fluoride concentration in the cell, thus reducing its toxicity. This chain is Fluoride-specific ion channel FluC, found in Ruegeria pomeroyi (strain ATCC 700808 / DSM 15171 / DSS-3) (Silicibacter pomeroyi).